The following is a 330-amino-acid chain: Putative [LysW]-L-2-aminoadipate/[LysW]-L-glutamate phosphate reductase (330 aa).

Residues 10 to 13 and 34 to 36 each bind NADP(+); these read SGYI and SRR. Cysteine 142 is an active-site residue. Position 297 (asparagine 297) interacts with NADP(+).

Belongs to the NAGSA dehydrogenase family. Type 1 subfamily. LysY sub-subfamily.

It is found in the cytoplasm. The catalysed reaction is [amino-group carrier protein]-C-terminal-N-(1-carboxy-5-oxopentan-1-yl)-L-glutamine + phosphate + NADP(+) = [amino-group carrier protein]-C-terminal-N-(1-carboxy-5-phosphooxy-5-oxopentan-1-yl)-L-glutamine + NADPH + H(+). The enzyme catalyses [amino-group carrier protein]-C-terminal-gamma-(L-glutamyl-5-semialdehyde)-L-glutamate + phosphate + NADP(+) = [amino-group carrier protein]-C-terminal-gamma-(5-phospho-L-glutamyl)-L-glutamate + NADPH + H(+). It functions in the pathway amino-acid biosynthesis; L-lysine biosynthesis via AAA pathway; L-lysine from L-alpha-aminoadipate (Thermus route): step 3/5. The protein operates within amino-acid biosynthesis; L-arginine biosynthesis. Functionally, involved in both the arginine and lysine biosynthetic pathways. The polypeptide is Putative [LysW]-L-2-aminoadipate/[LysW]-L-glutamate phosphate reductase (Thermococcus kodakarensis (strain ATCC BAA-918 / JCM 12380 / KOD1) (Pyrococcus kodakaraensis (strain KOD1))).